The following is a 188-amino-acid chain: MAIRRILRIDDAEDRKILKMQCRPVKLPDRNLKQLVADMFETMRAAHGVGLAAPQIGIPIQLCIIEIPAEYEERADGSVVEVAPAEPYVLINPRIVKMSGEEVMRDEGCLSLPGWYGMVPRQTWVTVEFQDLNGKHHRLRRAGDLLGWAIQHEVDHLNGILFTERIRDLSTLRDITKERDAQPVDQAP.

Fe cation-binding residues include C109 and H152. E153 is a catalytic residue. Fe cation is bound at residue H156.

The protein belongs to the polypeptide deformylase family. The cofactor is Fe(2+).

It catalyses the reaction N-terminal N-formyl-L-methionyl-[peptide] + H2O = N-terminal L-methionyl-[peptide] + formate. Its function is as follows. Removes the formyl group from the N-terminal Met of newly synthesized proteins. Requires at least a dipeptide for an efficient rate of reaction. N-terminal L-methionine is a prerequisite for activity but the enzyme has broad specificity at other positions. The polypeptide is Peptide deformylase (Chloroflexus aurantiacus (strain ATCC 29366 / DSM 635 / J-10-fl)).